We begin with the raw amino-acid sequence, 296 residues long: MSPLANRRFLKMHGAGNAIVVLDLRGTSIRVAPAEARAIAADAHSRFDQLMVVHDPVTPGTDAFMRIYNTDGSESGACGNGTRCVGYALLDDPAMARPAENGCLTLETKAGLVAVKRVTDRSFTVDMGQPRLRWDEIPLAEPFPDTRRIELQVGPIDDPILHSPAAVSMGNPHAIFFVERDPDTFDLGRIGPLLEAHPIFPERANISIAQVTSRDTIKLRVWERGAGLTLACGTAACATVVAAARLRMIGRAARVALPGGELSIEWRADDHVLMTGPVFLEGEGSLSPDLFAGLDG.

Substrate is bound by residues Asn17, Gln49, and Asn69. The Proton donor role is filled by Cys78. Substrate contacts are provided by residues 79–80 (GN), Asn171, Asn205, and 223–224 (ER). Residue Cys232 is the Proton acceptor of the active site. A substrate-binding site is contributed by 233–234 (GT).

The protein belongs to the diaminopimelate epimerase family. Homodimer.

Its subcellular location is the cytoplasm. The catalysed reaction is (2S,6S)-2,6-diaminopimelate = meso-2,6-diaminopimelate. It functions in the pathway amino-acid biosynthesis; L-lysine biosynthesis via DAP pathway; DL-2,6-diaminopimelate from LL-2,6-diaminopimelate: step 1/1. Functionally, catalyzes the stereoinversion of LL-2,6-diaminopimelate (L,L-DAP) to meso-diaminopimelate (meso-DAP), a precursor of L-lysine and an essential component of the bacterial peptidoglycan. This Methylorubrum populi (strain ATCC BAA-705 / NCIMB 13946 / BJ001) (Methylobacterium populi) protein is Diaminopimelate epimerase.